A 428-amino-acid chain; its full sequence is Neuromedin-U receptor 1 (428 aa).

Residues 1–59 lie on the Extracellular side of the membrane; that stretch reads MTPPCLNCSIFPGALSPNASRSPLVCNISEFKWPYQPEDLNLTDEALRLKYLGPQQMKQ. 2 N-linked (GlcNAc...) asparagine glycosylation sites follow: N27 and N41. The helical transmembrane segment at 60 to 80 threads the bilayer; that stretch reads FVPICVTYLLIFVVGTLGNGL. Topologically, residues 81 to 96 are cytoplasmic; that stretch reads TCTVILRNKTMRTPTN. Residues 97–117 traverse the membrane as a helical segment; that stretch reads FYLFSLAVSDMLVLLVGLPLE. At 118 to 137 the chain is on the extracellular side; sequence LYEMQQNYPFQLGASACYFR. An intrachain disulfide couples C134 to C219. Residues 138–158 form a helical membrane-spanning segment; the sequence is ILLLETVCLASVLNVTALSVE. Residues 159-181 lie on the Cytoplasmic side of the membrane; the sequence is RYVAVVRPLQAKSVMTRAHVRRM. The helical transmembrane segment at 182 to 202 threads the bilayer; it reads VGAIWVLATLFSLPNTSLHGL. The Extracellular portion of the chain corresponds to 203 to 235; sequence SQLTVPCRGPVPDSAICSLVGPMDFYKLVVLTT. A helical transmembrane segment spans residues 236 to 256; the sequence is ALLFFCLPMVTISVLYLLIGL. Topologically, residues 257 to 294 are cytoplasmic; that stretch reads RLRRERMLLQVEVKGRKTAATQETSHRRIQLQDRGRRQ. A helical membrane pass occupies residues 295-315; it reads VTKMLFALVVVFGICWAPFHA. Residues 316–339 are Extracellular-facing; the sequence is DRIMWSLVYGHSTEGLHLAYQCVH. A helical membrane pass occupies residues 340–360; it reads IASGIFFYLGSAANPVLYSLM. Residues 361–428 lie on the Cytoplasmic side of the membrane; sequence STRFRETFLQ…PGCQQETDPS (68 aa).

The protein belongs to the G-protein coupled receptor 1 family. In terms of tissue distribution, ubiquitously expressed.

It localises to the cell membrane. In terms of biological role, receptor for the neuromedin-U and neuromedin-S neuropeptides. This is Neuromedin-U receptor 1 (Nmur1) from Mus musculus (Mouse).